The following is a 111-amino-acid chain: Resistin-like beta (111 aa).

Residues Met-1–Thr-23 form the signal peptide. Intrachain disulfides connect Cys-55–Cys-108, Cys-67–Cys-107, Cys-76–Cys-93, Cys-78–Cys-95, and Cys-82–Cys-97.

The protein belongs to the resistin/FIZZ family. In terms of assembly, homodimer; disulfide-linked. As to expression, expressed only in the gastrointestinal tract, particularly the colon.

It is found in the secreted. Functionally, probable hormone. The polypeptide is Resistin-like beta (RETNLB) (Homo sapiens (Human)).